A 467-amino-acid polypeptide reads, in one-letter code: MLIFWTITLFLLGAAKGKEVCYEDLGCFSDTEPWGGTAIRPLKILPWSPEKIGTRFLLYTNENPNNFQILLLSDPSTIEASNFQMDRKTRFIIHGFIDKGDESWVTDMCKKLFEVEEVNCICVDWKKGSQATYTQAANNVRVVGAQVAQMLDILLTEYSYPPSKVHLIGHSLGAHVAGEAGSKTPGLSRITGLDPVEASFESTPEEVRLDPSDADFVDVIHTDAAPLIPFLGFGTNQQMGHLDFFPNGGESMPGCKKNALSQIVDLDGIWAGTRDFVACNHLRSYKYYLESILNPDGFAAYPCTSYKSFESDKCFPCPDQGCPQMGHYADKFAGRTSEEQQKFFLNTGEASNFARWRYGVSITLSGRTATGQIKVALFGNKGNTHQYSIFRGILKPGSTHSYEFDAKLDVGTIEKVKFLWNNNVINPTLPKVGATKITVQKGEEKTVYNFCSEDTVREDTLLTLTPC.

Positions 1 to 17 (MLIFWTITLFLLGAAKG) are cleaved as a signal peptide. 2 disulfide bridges follow: Cys-21/Cys-27 and Cys-109/Cys-120. The active-site Nucleophile is the Ser-171. Catalysis depends on Asp-194, which acts as the Charge relay system. Ca(2+) is bound by residues Glu-205, Arg-208, Asp-210, and Asp-213. Cys-255 and Cys-279 are joined by a disulfide. The Charge relay system role is filled by His-281. Cystine bridges form between Cys-303-Cys-314, Cys-317-Cys-322, and Cys-451-Cys-467. One can recognise a PLAT domain in the interval 356–467 (WRYGVSITLS…EDTLLTLTPC (112 aa)).

This sequence belongs to the AB hydrolase superfamily. Lipase family. In terms of tissue distribution, pancreas.

The protein localises to the secreted. In terms of biological role, may function as inhibitor of dietary triglyceride digestion. Lacks detectable lipase activity towards triglycerides, diglycerides, phosphatidylcholine, galactolipids or cholesterol esters (in vitro). The chain is Inactive pancreatic lipase-related protein 1 (PNLIPRP1) from Homo sapiens (Human).